The following is a 228-amino-acid chain: MAEVAENVVETFEEPAAPMEAEVAETILETNVVSTTELPEIKLFGRWSCDDVTVNDISLQDYISVKEKFARYLPHSAGRYAAKRFRKAQCPIVERLTCSLMMKGRNNGKKLMACRIVKHSFEIIHLLTGENPLQILVSAIINSGPREDSTRIGRAGTVRRQAVDVSPLRRVNQAIWLLCTGAREAAFRNIKTIAECLADELINAAKGSSNSYAIKKKDELERVAKSNR.

It belongs to the universal ribosomal protein uS7 family.

In Drosophila melanogaster (Fruit fly), this protein is Small ribosomal subunit protein uS7A (RpS5a).